We begin with the raw amino-acid sequence, 531 residues long: MQLTVWTYEGPPHVGAMRVATGMEGLHYVLHAPQGDTYADLLFTMIERRDRRPPVTYTTFAARDLGKDTAELFKTAAQNAYDRFKPQAMIVGASCTGSLIQDDPGGLAKALALPIPVVAIDLPAYQRKENWGAAETFYQLVRAIAGPKAPPPGSKRPERPAGKRPSCNLLGPTALGFRHRDDIIELTTLLGKLGIDVNVTAPMGATPADLARLGEADFNVVMYPETASQAASWLHRMFHQPFTKIVPIGVSATREFIEEVAKLADVDPTAVLKSYSSRLPWYSHSVDSTYLTGKRVFIFGDATHVVAAARMASDEMGFKVVGLGTYSREFGREIREAAKLYDVEPLITDDYLEVEAKVAELHPELVLGTQMERHIAKRLGVPCAVISAPVHVQDFPARYAPQMGFEGANVIFDTWVHPLMMGLEEHLLTMFRDDFEFKDGATPSHLGVGHAPAPAPAVADSAAVEVLDATTATTTETTTAVWAADAEKELRKIPFFVRGKARRNTERFANENGVATITVETLYDAKAHFSR.

Aspartate 36 contributes to the [4Fe-4S] cluster binding site. Aspartate 287 serves as the catalytic Proton donor. 422 to 423 (GL) contacts substrate.

The protein belongs to the ChlB/BchB/BchZ family. In terms of assembly, protochlorophyllide reductase is composed of three subunits; BchL, BchN and BchB. Forms a heterotetramer of two BchB and two BchN subunits. [4Fe-4S] cluster is required as a cofactor.

It catalyses the reaction chlorophyllide a + oxidized 2[4Fe-4S]-[ferredoxin] + 2 ADP + 2 phosphate = protochlorophyllide a + reduced 2[4Fe-4S]-[ferredoxin] + 2 ATP + 2 H2O. Its pathway is porphyrin-containing compound metabolism; bacteriochlorophyll biosynthesis (light-independent). Component of the dark-operative protochlorophyllide reductase (DPOR) that uses Mg-ATP and reduced ferredoxin to reduce ring D of protochlorophyllide (Pchlide) to form chlorophyllide a (Chlide). This reaction is light-independent. The NB-protein (BchN-BchB) is the catalytic component of the complex. The polypeptide is Light-independent protochlorophyllide reductase subunit B (Rhodopseudomonas palustris (strain BisA53)).